The chain runs to 456 residues: RuvB-like helicase 1 (456 aa).

70-77 serves as a coordination point for ATP; sequence GPPGTGKT.

It belongs to the RuvB family. As to quaternary structure, forms homohexameric rings. May form a dodecamer with rept made of two stacked hexameric rings. Component of the chromatin remodeling Ino80 complex.

Its subcellular location is the nucleus. The catalysed reaction is ATP + H2O = ADP + phosphate + H(+). In terms of biological role, acts as a transcriptional coactivator in Wg signaling. Its function is as follows. Proposed core component of the chromatin remodeling Ino80 complex which is involved in transcriptional regulation, DNA replication and probably DNA repair. This Aedes aegypti (Yellowfever mosquito) protein is RuvB-like helicase 1.